A 224-amino-acid polypeptide reads, in one-letter code: LexA repressor (224 aa).

The H-T-H motif DNA-binding region spans 29–49; the sequence is RAEIARALGFRSPNAAEDHLK. Catalysis depends on for autocatalytic cleavage activity residues Ser142 and Lys179.

It belongs to the peptidase S24 family. As to quaternary structure, homodimer.

The catalysed reaction is Hydrolysis of Ala-|-Gly bond in repressor LexA.. In terms of biological role, represses a number of genes involved in the response to DNA damage (SOS response), including recA and lexA. In the presence of single-stranded DNA, RecA interacts with LexA causing an autocatalytic cleavage which disrupts the DNA-binding part of LexA, leading to derepression of the SOS regulon and eventually DNA repair. The polypeptide is LexA repressor (Bordetella petrii (strain ATCC BAA-461 / DSM 12804 / CCUG 43448)).